The following is a 268-amino-acid chain: Centromere protein Q (268 aa).

Residues M1 to T80 form a disordered region. Residues S31 and S50 each carry the phosphoserine modification. Residues T58–T72 are compositionally biased toward basic residues. Residues E170–S206 adopt a coiled-coil conformation. Position 249 is a phosphoserine (S249).

The protein belongs to the CENP-Q/OKP1 family. In terms of assembly, component of the CENPA-CAD complex, composed of CENPI, CENPK, CENPL, CENPO, CENPP, CENPQ, CENPR and CENPS. The CENPA-CAD complex interacts with the CENPA-NAC complex, at least composed of CENPA, CENPC, CENPH, CENPM, CENPN, CENPT and CENPU. Post-translationally, phosphorylation at Ser-50 is essential for CENPE recruitment to kinetochores and orderly chromosome congression.

It localises to the nucleus. Its subcellular location is the chromosome. The protein resides in the centromere. Functionally, component of the CENPA-CAD (nucleosome distal) complex, a complex recruited to centromeres which is involved in assembly of kinetochore proteins, mitotic progression and chromosome segregation. May be involved in incorporation of newly synthesized CENPA into centromeres via its interaction with the CENPA-NAC complex. Plays an important role in chromosome congression and in the recruitment of CENP-O complex (which comprises CENPO, CENPP, CENPQ and CENPU), CENPE and PLK1 to the kinetochores. This is Centromere protein Q (CENPQ) from Homo sapiens (Human).